The following is a 330-amino-acid chain: 4-hydroxythreonine-4-phosphate dehydrogenase (330 aa).

Thr133 provides a ligand contact to substrate. Residues His161, His206, and His261 each contribute to the a divalent metal cation site. Positions 269, 278, and 287 each coordinate substrate.

It belongs to the PdxA family. Homodimer. It depends on Zn(2+) as a cofactor. The cofactor is Mg(2+). Co(2+) serves as cofactor.

It is found in the cytoplasm. The enzyme catalyses 4-(phosphooxy)-L-threonine + NAD(+) = 3-amino-2-oxopropyl phosphate + CO2 + NADH. The protein operates within cofactor biosynthesis; pyridoxine 5'-phosphate biosynthesis; pyridoxine 5'-phosphate from D-erythrose 4-phosphate: step 4/5. Its function is as follows. Catalyzes the NAD(P)-dependent oxidation of 4-(phosphooxy)-L-threonine (HTP) into 2-amino-3-oxo-4-(phosphooxy)butyric acid which spontaneously decarboxylates to form 3-amino-2-oxopropyl phosphate (AHAP). This Xylella fastidiosa (strain 9a5c) protein is 4-hydroxythreonine-4-phosphate dehydrogenase.